The sequence spans 235 residues: Ribitol-5-phosphate cytidylyltransferase (235 aa).

Residues 7 to 10 (LAGG), 82 to 88 (GADRNTS), and serine 113 contribute to the CTP site.

The protein belongs to the IspD/TarI cytidylyltransferase family. TarI subfamily.

The enzyme catalyses D-ribitol 5-phosphate + CTP + H(+) = CDP-L-ribitol + diphosphate. Its pathway is cell wall biogenesis; poly(ribitol phosphate) teichoic acid biosynthesis. Functionally, catalyzes the transfer of the cytidylyl group of CTP to D-ribitol 5-phosphate. The protein is Ribitol-5-phosphate cytidylyltransferase of Streptococcus pneumoniae (strain ATCC 700669 / Spain 23F-1).